A 125-amino-acid polypeptide reads, in one-letter code: Nuclear envelope phosphatase-regulatory subunit 1 (125 aa).

The residue at position 1 (Met-1) is an N-acetylmethionine. A run of 2 helical transmembrane segments spans residues 33 to 53 and 65 to 85; these read MLLIVVSVCTATGAWNWLIDP and WNHPFFTISCITLIGLFFAGI.

It belongs to the CNEP1R1 family. Interacts with CTDNEP1; the complex dephosphorylates LPIN1 and LPIN2.

The protein localises to the nucleus membrane. It is found in the cytoplasm. In terms of biological role, forms with the serine/threonine protein phosphatase CTDNEP1 an active complex which dephosphorylates and may activate LPIN1 and LPIN2. LPIN1 and LPIN2 are phosphatidate phosphatases that catalyze the conversion of phosphatidic acid to diacylglycerol and control the metabolism of fatty acids at different levels. May indirectly modulate the lipid composition of nuclear and/or endoplasmic reticulum membranes and be required for proper nuclear membrane morphology and/or dynamics. May also indirectly regulate the production of lipid droplets and triacylglycerol. The sequence is that of Nuclear envelope phosphatase-regulatory subunit 1 (CNEP1R1) from Bos taurus (Bovine).